A 444-amino-acid polypeptide reads, in one-letter code: MSDMTPREIVQELDKHIVGQKDAKRAVAIALRNRWRRQQLPEALRQEVTPKNILMIGPTGVGKTEIARRLARLANAPFIKVEATKFTEVGYVGRDVESIIRDLVDAAIKLLREQEMGKVRFRAEEAAEERVLDVLLPAPRQAGFMSEPASAPEQSETRQKFRKRLREGQLDDKEIEIQVSATPVGVEIMTPPGMEEMASQLQSLFQNIGGGRSQTRKLKIRDAMKLLTDEEAARMVNQDELKLRAVANVEQNGIVFLDEIDKVAKRGEYGGADVSREGVQRDLLPLVEGCTVNTKFGMVRTDHILFIASGAFHLSKPSDLIPELQGRLPIRVELSALTAEDFVRILTEPDASLTEQYSALLQTEGVEVNFAEDGVRRIAEIATRVNERTENIGARRLHTVMERLLEQISFEAPDHQGPVSIDAAYVDERLEELVQDEDLSRYIL.

Residues Val-18, 60–65 (GVGKTE), Asp-258, Glu-323, and Arg-395 each bind ATP.

It belongs to the ClpX chaperone family. HslU subfamily. A double ring-shaped homohexamer of HslV is capped on each side by a ring-shaped HslU homohexamer. The assembly of the HslU/HslV complex is dependent on binding of ATP.

The protein resides in the cytoplasm. Functionally, ATPase subunit of a proteasome-like degradation complex; this subunit has chaperone activity. The binding of ATP and its subsequent hydrolysis by HslU are essential for unfolding of protein substrates subsequently hydrolyzed by HslV. HslU recognizes the N-terminal part of its protein substrates and unfolds these before they are guided to HslV for hydrolysis. The polypeptide is ATP-dependent protease ATPase subunit HslU (Thioalkalivibrio sulfidiphilus (strain HL-EbGR7)).